The sequence spans 595 residues: Adenine deaminase (595 aa).

Belongs to the metallo-dependent hydrolases superfamily. Adenine deaminase family. Homodimer. Mn(2+) serves as cofactor.

It carries out the reaction adenine + H2O + H(+) = hypoxanthine + NH4(+). This is Adenine deaminase from Serratia proteamaculans (strain 568).